A 651-amino-acid chain; its full sequence is Probable potassium transport system protein Kup (651 aa).

Transmembrane regions (helical) follow at residues 30 to 50 (LALA…LYSL), 71 to 91 (IISM…VIFV), 124 to 144 (LLLG…TPAI), 158 to 178 (PDAE…LFIV), 190 to 210 (FGPV…PWII), 233 to 253 (AMAF…EALY), 268 to 288 (WFGL…AMIL), 310 to 330 (LVTI…SGAF), 358 to 378 (IYIP…ILIF), 387 to 407 (AYGL…LVLA), 413 to 433 (WPMW…LSIF), and 437 to 457 (LLKI…VVII).

Belongs to the HAK/KUP transporter (TC 2.A.72) family.

Its subcellular location is the cell membrane. It catalyses the reaction K(+)(in) + H(+)(in) = K(+)(out) + H(+)(out). Its function is as follows. Transport of potassium into the cell. Likely operates as a K(+):H(+) symporter. This Cutibacterium acnes (strain DSM 16379 / KPA171202) (Propionibacterium acnes) protein is Probable potassium transport system protein Kup.